The sequence spans 436 residues: 3-ketoacyl-CoA thiolase (436 aa).

The active-site Acyl-thioester intermediate is the cysteine 99. Active-site proton acceptor residues include histidine 392 and cysteine 422.

This sequence belongs to the thiolase-like superfamily. Thiolase family. In terms of assembly, heterotetramer of two alpha chains (FadJ) and two beta chains (FadI).

Its subcellular location is the cytoplasm. It catalyses the reaction an acyl-CoA + acetyl-CoA = a 3-oxoacyl-CoA + CoA. It participates in lipid metabolism; fatty acid beta-oxidation. Catalyzes the final step of fatty acid oxidation in which acetyl-CoA is released and the CoA ester of a fatty acid two carbons shorter is formed. This is 3-ketoacyl-CoA thiolase from Aeromonas salmonicida (strain A449).